Consider the following 314-residue polypeptide: DNA-directed RNA polymerase subunit alpha (314 aa).

The segment at 1-227 (MTYFQIECVE…SLFYPLTNLN (227 aa)) is alpha N-terminal domain (alpha-NTD). The alpha C-terminal domain (alpha-CTD) stretch occupies residues 239–314 (EEEINQVLIE…LPKEKNIQNT (76 aa)).

The protein belongs to the RNA polymerase alpha chain family. As to quaternary structure, in plastids the minimal PEP RNA polymerase catalytic core is composed of four subunits: alpha, beta, beta', and beta''. When a (nuclear-encoded) sigma factor is associated with the core the holoenzyme is formed, which can initiate transcription.

The protein localises to the plastid. It is found in the chloroplast. The enzyme catalyses RNA(n) + a ribonucleoside 5'-triphosphate = RNA(n+1) + diphosphate. In terms of biological role, DNA-dependent RNA polymerase catalyzes the transcription of DNA into RNA using the four ribonucleoside triphosphates as substrates. In Gracilaria tenuistipitata var. liui (Red alga), this protein is DNA-directed RNA polymerase subunit alpha.